The primary structure comprises 59 residues: Single-pass membrane and coiled-coil domain-containing protein 4 (59 aa).

The tract at residues Met-1–Glu-25 is disordered. A compositionally biased stretch (basic and acidic residues) spans Lys-9–Ala-22. Residues Lys-9–Thr-31 adopt a coiled-coil conformation. The chain crosses the membrane as a helical span at residues Thr-32 to Ala-52.

This sequence belongs to the SMCO4 family.

It localises to the membrane. This chain is Single-pass membrane and coiled-coil domain-containing protein 4 (smco4), found in Taeniopygia guttata (Zebra finch).